We begin with the raw amino-acid sequence, 238 residues long: Probable transcriptional regulatory protein TC_0742 (238 aa).

The tract at residues 1–21 is disordered; sequence MAGHSKWANTKHRKERADHKK. Positions 9 to 21 are enriched in basic residues; sequence NTKHRKERADHKK.

It belongs to the TACO1 family.

It localises to the cytoplasm. This Chlamydia muridarum (strain MoPn / Nigg) protein is Probable transcriptional regulatory protein TC_0742.